A 220-amino-acid chain; its full sequence is Probable nicotinate-nucleotide adenylyltransferase (220 aa).

It belongs to the NadD family.

The enzyme catalyses nicotinate beta-D-ribonucleotide + ATP + H(+) = deamido-NAD(+) + diphosphate. It participates in cofactor biosynthesis; NAD(+) biosynthesis; deamido-NAD(+) from nicotinate D-ribonucleotide: step 1/1. Its function is as follows. Catalyzes the reversible adenylation of nicotinate mononucleotide (NaMN) to nicotinic acid adenine dinucleotide (NaAD). The protein is Probable nicotinate-nucleotide adenylyltransferase of Serratia proteamaculans (strain 568).